A 465-amino-acid polypeptide reads, in one-letter code: uncharacterized protein (465 aa).

11 helical membrane-spanning segments follow: residues 19-39 (VLGP…GEYM), 50-70 (MIAG…VAMI), 91-111 (IVGP…YTML), 140-160 (FIVL…LATL), 164-184 (LVIT…VQFG), 201-221 (PYGW…YLGI), 244-264 (AGIM…SGLM), 288-308 (LMVL…NGCI), 342-362 (IVFL…DQVV), 363-383 (TFSI…MVMF), and 403-423 (LPTV…FLGY).

It belongs to the amino acid-polyamine-organocation (APC) superfamily.

The protein resides in the cell membrane. Its function is as follows. Probable amino-acid or metabolite transport protein. This is an uncharacterized protein from Rhizobium meliloti (strain 1021) (Ensifer meliloti).